The sequence spans 148 residues: SsrA-binding protein (148 aa).

It belongs to the SmpB family.

The protein resides in the cytoplasm. Functionally, required for rescue of stalled ribosomes mediated by trans-translation. Binds to transfer-messenger RNA (tmRNA), required for stable association of tmRNA with ribosomes. tmRNA and SmpB together mimic tRNA shape, replacing the anticodon stem-loop with SmpB. tmRNA is encoded by the ssrA gene; the 2 termini fold to resemble tRNA(Ala) and it encodes a 'tag peptide', a short internal open reading frame. During trans-translation Ala-aminoacylated tmRNA acts like a tRNA, entering the A-site of stalled ribosomes, displacing the stalled mRNA. The ribosome then switches to translate the ORF on the tmRNA; the nascent peptide is terminated with the 'tag peptide' encoded by the tmRNA and targeted for degradation. The ribosome is freed to recommence translation, which seems to be the essential function of trans-translation. In Pseudothermotoga lettingae (strain ATCC BAA-301 / DSM 14385 / NBRC 107922 / TMO) (Thermotoga lettingae), this protein is SsrA-binding protein.